The chain runs to 853 residues: Trimethylguanosine synthase (853 aa).

The segment at 54 to 84 (NNAGDQGTEEEEDGHSNGTAESHSPNESDLD) is disordered. T61 is subject to Phosphothreonine. The segment covering 69-80 (SNGTAESHSPNE) has biased composition (polar residues). 4 positions are modified to phosphoserine: S81, S85, S92, and S139. Y144 carries the phosphotyrosine modification. S152 carries the post-translational modification Phosphoserine. Disordered regions lie at residues 328–437 (VEQS…DDNG) and 523–549 (ETSQDSLSQNKMQDTCTSSDSEEQDMS). Positions 365-383 (KENDISENRSSDQPAKELQ) are enriched in basic and acidic residues. S405 and S431 each carry phosphoserine. Acidic residues predominate over residues 424–435 (DVDENPDSEVDD). Positions 526 to 541 (QDSLSQNKMQDTCTSS) are enriched in polar residues. S572 bears the Phosphoserine mark. Positions 594 to 623 (CSTEEIPNSPHAETEVEIKKKKKKNKNKKI) are disordered. Residues 612–621 (KKKKKKNKNK) show a composition bias toward basic residues. D711 contacts S-adenosyl-L-methionine.

Belongs to the methyltransferase superfamily. Trimethylguanosine synthase family. May form homooligomers. Interacts with CREBBP/CBP, EED/WAIT1, EP300/P300, NCOA6/PRIP, PPARBP/PBP and SMN. Ubiquitously expressed.

The protein resides in the cytoplasm. It localises to the nucleus. Its subcellular location is the cajal body. It is found in the nucleolus. The catalysed reaction is a 5'-end (N(7)-methyl 5'-triphosphoguanosine)-ribonucleoside in snRNA + S-adenosyl-L-methionine = a 5'-end (N(2),N(7)-dimethyl 5'-triphosphoguanosine)-ribonucleoside in snRNA + S-adenosyl-L-homocysteine + H(+). It carries out the reaction a 5'-end (N(7)-methyl 5'-triphosphoguanosine)-ribonucleoside in snoRNA + S-adenosyl-L-methionine = a 5'-end (N(2),N(7)-dimethyl 5'-triphosphoguanosine)-ribonucleoside in snoRNA + S-adenosyl-L-homocysteine + H(+). It catalyses the reaction a 5'-end (N(2),N(7)-dimethyl 5'-triphosphoguanosine)-ribonucleoside in snRNA + S-adenosyl-L-methionine = a 5'-end (N(2),N(2),N(7)-trimethyl 5'-triphosphoguanosine)-ribonucleoside in snRNA + S-adenosyl-L-homocysteine + H(+). The enzyme catalyses a 5'-end (N(2),N(7)-dimethyl 5'-triphosphoguanosine)-ribonucleoside in snoRNA + S-adenosyl-L-methionine = a 5'-end (N(2),N(2),N(7)-trimethyl 5'-triphosphoguanosine)-ribonucleoside in snoRNA + S-adenosyl-L-homocysteine + H(+). In terms of biological role, catalyzes the 2 serial methylation steps for the conversion of the 7-monomethylguanosine (m(7)G) caps of snRNAs and snoRNAs to a 2,2,7-trimethylguanosine (m(2,2,7)G) cap structure. The enzyme is specific for guanine, and N7 methylation must precede N2 methylation. Hypermethylation of the m7G cap of U snRNAs leads to their concentration in nuclear foci, their colocalization with coilin and the formation of canonical Cajal bodies (CBs). Plays a role in transcriptional regulation. The polypeptide is Trimethylguanosine synthase (Tgs1) (Mus musculus (Mouse)).